Reading from the N-terminus, the 1816-residue chain is Kinesin-like protein KIF1B (1816 aa).

Ser2 carries the N-acetylserine modification. The 350-residue stretch at 5–354 (SVKVAVRVRP…LRYADRAKQI (350 aa)) folds into the Kinesin motor domain. 97–104 (GQTGAGKS) is a binding site for ATP. The interaction with KIFBP stretch occupies residues 270–350 (NINKSLTTLG…TLSTLRYADR (81 aa)). Residues 365-386 (NAKLVRELKEEVTRLKDLLRAQ) are a coiled coil. Residues 431 to 450 (FSTASMGSLTSSPSSCSLSS) are disordered. Low complexity predominate over residues 432–450 (STASMGSLTSSPSSCSLSS). The stretch at 470–502 (GEEAIERLKESEKIIAELNETWEEKLRKTEAIR) forms a coiled coil. Residues 556 to 612 (TRVGQADAERRQDIVLSGAHIKEEHCIFRSERSNSGEVIVTLEPCERSETYVNGKRV) form the FHA domain. Thr647 and Thr652 each carry phosphothreonine. Phosphoserine is present on residues Gln663 and Glu665. 2 coiled-coil regions span residues 668–737 (EKQG…EEEV) and 841–869 (SLEKLKQRLDLMREMYDRAGEMASSAQDE). Ser1054 and Ser1057 each carry phosphoserine. Thr1075 is subject to Phosphothreonine. Phosphoserine is present on residues Asn1141, Ser1416, Ser1454, and Ser1487. Residues 1550–1570 (STTTFESAITPSESSGYDSGD) form a disordered region. The span at 1554 to 1566 (FESAITPSESSGY) shows a compositional bias: polar residues. Residues Ser1573, Ser1603, Ser1610, and Ser1613 each carry the phosphoserine modification. The segment at 1617–1660 (RDPSESSFSSATLTPSSTCPSLVDSRSNSLDQKTPEANSRASSP) is disordered. Low complexity predominate over residues 1621–1634 (ESSFSSATLTPSST). A compositionally biased stretch (polar residues) spans 1640–1658 (DSRSNSLDQKTPEANSRAS). A PH domain is found at 1702–1799 (VSKKGYLHFK…WLYAFNPLLA (98 aa)).

It belongs to the TRAFAC class myosin-kinesin ATPase superfamily. Kinesin family. Unc-104 subfamily. In terms of assembly, monomer. Interacts with KIFBP; positively regulates KIF1B microtubule motor activity. Interacts (via C-terminus end of the kinesin-motor domain) with CHP1; the interaction occurs in a calcium-dependent manner. As to quaternary structure, interacts with MADD (via death domain); links this isoform to Rab3-carrying vesicles in anterograde synaptic vesicle transport. As to expression, isoform 3 is abundant in the skeletal muscle. It is also expressed in fetal brain, lung and kidney, and adult heart, placenta, testis, ovary and small intestine. Isoform 2 is abundant in the brain and also expressed in fetal heart, lung, liver and kidney, and adult skeletal muscle, placenta, liver, kidney, heart, spleen, thymus, prostate, testis, ovary, small intestine, colon and pancreas.

It is found in the cytoplasm. It localises to the cytoskeleton. The protein resides in the cytoplasmic vesicle. Its subcellular location is the secretory vesicle. The protein localises to the synaptic vesicle membrane. It is found in the mitochondrion. It catalyses the reaction ATP + H2O + a kinesin associated with a microtubule at position (n) = ADP + phosphate a kinesin associated with a microtubule at position (n+1, toward the plus end).. Its function is as follows. Has a plus-end-directed microtubule motor activity and functions as a motor for transport of vesicles and organelles along microtubules. In terms of biological role, has a plus-end-directed microtubule motor activity and functions as a motor for anterograde synaptic vesicle transport along axonal microtubules from the cell body to the presynapse in neuronal cells. Functions as a downstream effector in a developmental apoptotic pathway that is activated when nerve growth factor (NGF) becomes limiting for neuronal progenitor cells. Functionally, has a plus-end-directed microtubule motor activity and functions as a motor for anterograde transport of mitochondria. The protein is Kinesin-like protein KIF1B of Homo sapiens (Human).